Reading from the N-terminus, the 427-residue chain is N-acylglucosamine 2-epimerase (427 aa).

The segment at 195–216 (LLNLVEQLGEADEELAGKYAEL) is leucine-zipper.

Belongs to the N-acylglucosamine 2-epimerase family. In terms of assembly, homodimer. Forms a heterodimer with renin and inhibits its activity.

It catalyses the reaction an N-acyl-D-glucosamine = an N-acyl-D-mannosamine. The protein operates within amino-sugar metabolism; N-acetylneuraminate degradation. With respect to regulation, inhibited by N-ethylmaleimide, 5,5'-dithiobis-2-nitrobenzoate and iodoacetic acid. Its function is as follows. Catalyzes the interconversion of N-acetylglucosamine to N-acetylmannosamine. Involved in the N-glycolylneuraminic acid (Neu5Gc) degradation pathway: although human is not able to catalyze formation of Neu5Gc due to the inactive CMAHP enzyme, Neu5Gc is present in food and must be degraded. The chain is N-acylglucosamine 2-epimerase (RENBP) from Homo sapiens (Human).